Reading from the N-terminus, the 137-residue chain is Large ribosomal subunit protein uL16 (137 aa).

Belongs to the universal ribosomal protein uL16 family. As to quaternary structure, part of the 50S ribosomal subunit.

Binds 23S rRNA and is also seen to make contacts with the A and possibly P site tRNAs. This Spiroplasma kunkelii protein is Large ribosomal subunit protein uL16.